Here is a 116-residue protein sequence, read N- to C-terminus: Large ribosomal subunit protein bL19 (116 aa).

The protein belongs to the bacterial ribosomal protein bL19 family.

Functionally, this protein is located at the 30S-50S ribosomal subunit interface and may play a role in the structure and function of the aminoacyl-tRNA binding site. This is Large ribosomal subunit protein bL19 from Streptomyces avermitilis (strain ATCC 31267 / DSM 46492 / JCM 5070 / NBRC 14893 / NCIMB 12804 / NRRL 8165 / MA-4680).